The sequence spans 273 residues: 4-hydroxy-tetrahydrodipicolinate reductase (273 aa).

Residues 11–16 (GALGRM), 102–104 (GTT), and 126–129 (SPNF) each bind NAD(+). H159 (proton donor/acceptor) is an active-site residue. A (S)-2,3,4,5-tetrahydrodipicolinate-binding site is contributed by H160. The active-site Proton donor is the K163. Position 169–170 (169–170 (GT)) interacts with (S)-2,3,4,5-tetrahydrodipicolinate.

It belongs to the DapB family. As to quaternary structure, homotetramer.

It is found in the cytoplasm. It carries out the reaction (S)-2,3,4,5-tetrahydrodipicolinate + NAD(+) + H2O = (2S,4S)-4-hydroxy-2,3,4,5-tetrahydrodipicolinate + NADH + H(+). The catalysed reaction is (S)-2,3,4,5-tetrahydrodipicolinate + NADP(+) + H2O = (2S,4S)-4-hydroxy-2,3,4,5-tetrahydrodipicolinate + NADPH + H(+). It functions in the pathway amino-acid biosynthesis; L-lysine biosynthesis via DAP pathway; (S)-tetrahydrodipicolinate from L-aspartate: step 4/4. Its function is as follows. Catalyzes the conversion of 4-hydroxy-tetrahydrodipicolinate (HTPA) to tetrahydrodipicolinate. The protein is 4-hydroxy-tetrahydrodipicolinate reductase of Buchnera aphidicola subsp. Cinara cedri (strain Cc).